Reading from the N-terminus, the 63-residue chain is Beta-defensin 4 (63 aa).

The signal sequence occupies residues 1 to 22 (MRLHHLLLAVLFLVLSAGSGFT). Gln23 is subject to Pyrrolidone carboxylic acid. Intrachain disulfides connect Cys31-Cys60, Cys38-Cys53, and Cys43-Cys61.

This sequence belongs to the beta-defensin family. As to expression, neutrophilic granules.

The protein resides in the secreted. Has bactericidal activity. Active against E.coli ML35 and S.aureus 502A. This chain is Beta-defensin 4 (DEFB4), found in Bos taurus (Bovine).